The following is an 83-amino-acid chain: Kappa-ctenitoxin-Pn1a (83 aa).

The first 21 residues, 1–21 (MWFKIQVLVLAITLITLGIQA), serve as a signal peptide directing secretion. Residues 22–37 (EPNSSPNNPLIVEEDR) constitute a propeptide that is removed on maturation. Intrachain disulfides connect C40/C55, C47/C60, C54/C71, and C62/C69. Residues 78 to 83 (LFGFGK) constitute a propeptide that is removed on maturation.

Belongs to the neurotoxin 02 (plectoxin) family. In terms of tissue distribution, expressed by the venom gland.

It localises to the secreted. Antagonist of L-type calcium channels (Cav1/CACNA1). In GH3 neuroendocrinal cell line, it reversibly inhibits the A-type potassium current but does not block other potassium currents or calcium channels. Shows an important acetylcholine-mediated antiarrhythmogenic effect in isolated hearts. In vivo, causes paralysis in the posterior limbs and gradual decreases in movement and aggression during 24 hours at dose levels of 5 ug per mouse. The protein is Kappa-ctenitoxin-Pn1a of Phoneutria nigriventer (Brazilian armed spider).